The following is a 596-amino-acid chain: Elongation factor 4 (596 aa).

The region spanning 2-183 (KNIRNFSIIA…EIIRRIPAPN (182 aa)) is the tr-type G domain. Residues 14–19 (DHGKST) and 130–133 (NKID) contribute to the GTP site.

It belongs to the TRAFAC class translation factor GTPase superfamily. Classic translation factor GTPase family. LepA subfamily.

It localises to the cell inner membrane. The enzyme catalyses GTP + H2O = GDP + phosphate + H(+). Functionally, required for accurate and efficient protein synthesis under certain stress conditions. May act as a fidelity factor of the translation reaction, by catalyzing a one-codon backward translocation of tRNAs on improperly translocated ribosomes. Back-translocation proceeds from a post-translocation (POST) complex to a pre-translocation (PRE) complex, thus giving elongation factor G a second chance to translocate the tRNAs correctly. Binds to ribosomes in a GTP-dependent manner. The chain is Elongation factor 4 from Wolinella succinogenes (strain ATCC 29543 / DSM 1740 / CCUG 13145 / JCM 31913 / LMG 7466 / NCTC 11488 / FDC 602W) (Vibrio succinogenes).